Consider the following 516-residue polypeptide: GTPase Obg (516 aa).

One can recognise an Obg domain in the interval 4-161 (PTFVDRVTLH…LEIVLELKVV (158 aa)). An OBG-type G domain is found at 162–332 (ADIGLVGFPS…LTFAMAGIVE (171 aa)). GTP is bound by residues 168–175 (GFPSAGKS), 193–197 (FTTLV), 214–217 (DVPG), 284–287 (NKVD), and 313–315 (SAA). Mg(2+) is bound by residues Ser-175 and Thr-195. The 82-residue stretch at 351–432 (PSVDGSDAFT…ENAVVFDFKP (82 aa)) folds into the OCT domain. Residues 466–491 (AMADRAEGETRADVARRLDRPAREDG) are compositionally biased toward basic and acidic residues. Positions 466 to 516 (AMADRAEGETRADVARRLDRPAREDGGAYGPQSYEIGGRDDPDWAEEDLGE) are disordered.

Belongs to the TRAFAC class OBG-HflX-like GTPase superfamily. OBG GTPase family. In terms of assembly, monomer. It depends on Mg(2+) as a cofactor.

The protein resides in the cytoplasm. Functionally, an essential GTPase which binds GTP, GDP and possibly (p)ppGpp with moderate affinity, with high nucleotide exchange rates and a fairly low GTP hydrolysis rate. Plays a role in control of the cell cycle, stress response, ribosome biogenesis and in those bacteria that undergo differentiation, in morphogenesis control. The sequence is that of GTPase Obg from Nocardioides sp. (strain ATCC BAA-499 / JS614).